Here is a 940-residue protein sequence, read N- to C-terminus: MSDYKFTLNLPETEFPMRGNLANREPEMLERWTKDGLYQQIRDSRIGRTPFILHDGPPYANGSIHIGHSVNKILKDIIVKSKTMSGFDAPYVPGWDCHGLPIELKVEQKVGKPGQKISAAEFREECRKYAAEQVDGQREDFIRLGVLGDWQNPYLTMDFATEANIVRSLSKVIENGHLHKGVKPVHWCTDCGSALAEAEVEYEDKTSPAIDVAFTAVDSKAVAVKFGVSDYSHSVSMVIWTTTPWTLPANRALSISPELDYSLVEFVKDGVTHAVILADVLVEACMTRYGAESHSVLAKIKGAALELVRFKHPFLAFDVPAILGDHVTTDAGTGVVHTAPGHGQDDFVVGQKYGLEVANPVGDNGVYKPDTEFFAGQHVFKANDNVVALLKEKGALLHHVAYRHSYPHCWRHKTPIIFRATPQWFISMDNHNLRKQALSEIEQIQWIPDWGQSRIEKMVENRPDWCISRQRTWGVPITLFVHRETEELHPDSVSLMARVANRIEQEGIQAWWDLDAAELLGEEAEQYRKVTDTLDVWYDSGSTFASVVAARPEFHGHGVDLYLEGSDQHRGWFMSSLMISTAMTGKAPYKQVLTHGFTVDGKGRKMSKSIGNVIAPQQVTNKLGADILRLWVAATDYSGEMTVSDEILNRSADAYRRIRNTARFLLANLNGFDPKNDLVAVEDMVALDRWAVRRAAALQQEIIEAYEQYNFHIVTQKLMQFCSIELGSFYLDIIKDRQYTAKQEGHARRSCQSALFHIAEAMVRWIAPVLSFTADEVWQLLPGQRDAYVFTQEWYQGLQSITLDTDLSDAYWENLLTVRNEVNKVIEQARRDKRVGGSLEAEVTLFADATLTEQLTHIGDELRFVLLTSEAKVLPLVDATSDAVETELASLKLVVNATTAEKCERCWHHREEVGTIEAHPTLCHRCVTNIEGDGEVRLFA.

The short motif at 58–68 is the 'HIGH' region element; the sequence is PYANGSIHIGH. Glutamate 564 lines the L-isoleucyl-5'-AMP pocket. The short motif at 605–609 is the 'KMSKS' region element; sequence KMSKS. Lysine 608 lines the ATP pocket. Zn(2+) is bound by residues cysteine 903, cysteine 906, cysteine 923, and cysteine 926.

Belongs to the class-I aminoacyl-tRNA synthetase family. IleS type 1 subfamily. Monomer. It depends on Zn(2+) as a cofactor.

The protein resides in the cytoplasm. The catalysed reaction is tRNA(Ile) + L-isoleucine + ATP = L-isoleucyl-tRNA(Ile) + AMP + diphosphate. Functionally, catalyzes the attachment of isoleucine to tRNA(Ile). As IleRS can inadvertently accommodate and process structurally similar amino acids such as valine, to avoid such errors it has two additional distinct tRNA(Ile)-dependent editing activities. One activity is designated as 'pretransfer' editing and involves the hydrolysis of activated Val-AMP. The other activity is designated 'posttransfer' editing and involves deacylation of mischarged Val-tRNA(Ile). This is Isoleucine--tRNA ligase from Shewanella oneidensis (strain ATCC 700550 / JCM 31522 / CIP 106686 / LMG 19005 / NCIMB 14063 / MR-1).